A 429-amino-acid chain; its full sequence is MRAELNNGLIDFLKASPTPFHATATLVQHFEAAGFQRLDERDTWAIETGGRYFVTRNDSSIVAFRMGRQSPLTGGIRMVGAHTDSPCLRVKPQPELQRQGFWQLGVEVYGGALLAPWFDRDLSLAGRVTFRRDGKVESQLIDFKLPIAVIPNLAIHLNRTANEGWAINAQNELPPILAQVAGDERADFRALLTDQLAREHGLNADVVLDYELSFYDTQSAAVVGLNGDFLAGARLDNLLSCYAGMQALLNSESDETALLVCTDHEEVGSSSTCGADGAMLEQIVQRLLPSSEDYVRTIQKSLLISADNAHGIHPNYAEKHDANHGPKLNAGPVIKVNSNQRYATNSETAGFFRHLCMAEEVPVQSFVVRSDMACGSTIGPITASHLGIRTVDIGLPTFAMHSIRELAGSHDLAHLVKVLSAFYASHELP.

The Zn(2+) site is built by His82, His156, and His401.

Belongs to the peptidase M18 family. It depends on Zn(2+) as a cofactor.

This chain is Probable M18 family aminopeptidase 2, found in Pseudomonas savastanoi pv. phaseolicola (strain 1448A / Race 6) (Pseudomonas syringae pv. phaseolicola (strain 1448A / Race 6)).